The primary structure comprises 199 residues: dTTP/UTP pyrophosphatase (199 aa).

Residue Asp75 is the Proton acceptor of the active site.

The protein belongs to the Maf family. YhdE subfamily. A divalent metal cation is required as a cofactor.

It is found in the cytoplasm. The catalysed reaction is dTTP + H2O = dTMP + diphosphate + H(+). It carries out the reaction UTP + H2O = UMP + diphosphate + H(+). Its function is as follows. Nucleoside triphosphate pyrophosphatase that hydrolyzes dTTP and UTP. May have a dual role in cell division arrest and in preventing the incorporation of modified nucleotides into cellular nucleic acids. This is dTTP/UTP pyrophosphatase from Methylobacillus flagellatus (strain ATCC 51484 / DSM 6875 / VKM B-1610 / KT).